The sequence spans 186 residues: Centromere protein M (186 aa).

The protein localises to the nucleus. It is found in the chromosome. It localises to the centromere. Probable component of a centromeric complex involved in assembly of kinetochore proteins, mitotic progression and chromosome segregation. In Danio rerio (Zebrafish), this protein is Centromere protein M (cenpm).